Here is a 388-residue protein sequence, read N- to C-terminus: Meiotic driver wtf13 (388 aa).

Over residues 1-29 the composition is skewed to basic and acidic residues; the sequence is MKNKDYPLRSSMDELSTKNDNEIDLEKGP. A disordered region spans residues 1 to 39; the sequence is MKNKDYPLRSSMDELSTKNDNEIDLEKGPLPEYNSEDGS. The next 9 helical transmembrane spans lie at 89 to 109, 119 to 139, 152 to 172, 182 to 202, 207 to 227, 243 to 263, 267 to 287, 297 to 317, and 331 to 351; these read LLISVLAVIVVFFTAWVCVNP, AFSVTIGITCPIVFIAIFCFF, VTVIFLAQCVKVTAISLAQCV, CVKVTAVFLAKCVKVIAVGLY, DLVVTIWLAWVVICFILFGCV, CSISAALFFILLLVCIPIWTL, LFGLFQVLGVQSCVVIVTKGL, ATGYEIEASSLFVIGNFLFFY, and FIGNGIASFLGGLGNAFGGIG.

The protein belongs to the WTF family. In terms of assembly, homomer. Forms protein aggregates. The two isoforms can interact with each other and with themselves. High sequence similarity is required for their interaction.

It localises to the spore membrane. The protein resides in the vacuole membrane. Its subcellular location is the ascus epiplasm. The protein localises to the cytoplasm. It is found in the endoplasmic reticulum membrane. Functionally, promotes unequal transmission of alleles from the parental zygote to progeny spores by acting as poison/antidote system where the poison and antidote proteins are produced from the same locus; the poison component is trans-acting and targets all spores within an ascus whereas the antidote component is spore-specific, leading to poisoning of all progeny that do not inherit the allele. Localizes isoform 2 to the vacuole thereby facilitating its degradation. In addition to suppressing isoform 2, also suppresses S.pombe strain FY29033 wtf18 isoform 2. In terms of biological role, forms toxic aggregates that disrupt spore maturation. The protein is Meiotic driver wtf13 of Schizosaccharomyces pombe (strain 972 / ATCC 24843) (Fission yeast).